Here is a 191-residue protein sequence, read N- to C-terminus: ADP-ribosylation factor (191 aa).

A lipid anchor (N-myristoyl glycine) is attached at Gly2. Residues 24 to 31 (GLDAAGKT), 67 to 71 (DVGGQ), and 128 to 131 (NKQD) contribute to the GTP site.

The protein belongs to the small GTPase superfamily. Arf family.

It is found in the golgi apparatus. Its function is as follows. GTP-binding protein involved in protein trafficking; may modulate vesicle budding and uncoating within the Golgi apparatus. The sequence is that of ADP-ribosylation factor from Giardia intestinalis (Giardia lamblia).